Here is a 303-residue protein sequence, read N- to C-terminus: Leukocyte immunoglobulin-like receptor subfamily B member 4B (303 aa).

An N-terminal signal peptide occupies residues 1-23 (MIAMLTVLLYLALILEPRTAVQA). Over 24–238 (GHLPKPIIWA…TEDGLETYQK (215 aa)) the chain is Extracellular. 2 Ig-like C2-type domains span residues 42–123 (YTSV…AYEN) and 124–212 (PSLS…KPSN). An intrachain disulfide couples Cys-49 to Cys-98. Asn-79, Asn-133, and Asn-191 each carry an N-linked (GlcNAc...) asparagine glycan. Cys-144 and Cys-196 are oxidised to a cystine. A helical membrane pass occupies residues 239-260 (ILIGVLVSFLLLFFLLLFLILI). The Cytoplasmic portion of the chain corresponds to 261-303 (GYQCRHKNKANASVKNTQSEDNAELNSWNPQNEDPPRELCTPR). Polar residues predominate over residues 275-292 (KNTQSEDNAELNSWNPQN). Residues 275–303 (KNTQSEDNAELNSWNPQNEDPPRELCTPR) are disordered.

In terms of assembly, monomer and homodimer. In terms of tissue distribution, expressed on mast cells (at protein level). Also expressed at much lower levels on natural killer cells (at protein level).

The protein localises to the cell membrane. Plays a role in mast cell activation. The chain is Leukocyte immunoglobulin-like receptor subfamily B member 4B from Mus musculus (Mouse).